Here is a 197-residue protein sequence, read N- to C-terminus: GTP cyclohydrolase-2 (197 aa).

50 to 54 (RIHSE) lines the GTP pocket. Zn(2+) is bound by residues cysteine 55, cysteine 66, and cysteine 68. Residues glutamine 71, 93–95 (EGR), and threonine 115 contribute to the GTP site. Residue aspartate 127 is the Proton acceptor of the active site. Arginine 129 serves as the catalytic Nucleophile. GTP is bound by residues threonine 150 and lysine 155.

The protein belongs to the GTP cyclohydrolase II family. Zn(2+) serves as cofactor.

It catalyses the reaction GTP + 4 H2O = 2,5-diamino-6-hydroxy-4-(5-phosphoribosylamino)-pyrimidine + formate + 2 phosphate + 3 H(+). Its pathway is cofactor biosynthesis; riboflavin biosynthesis; 5-amino-6-(D-ribitylamino)uracil from GTP: step 1/4. In terms of biological role, catalyzes the conversion of GTP to 2,5-diamino-6-ribosylamino-4(3H)-pyrimidinone 5'-phosphate (DARP), formate and pyrophosphate. The sequence is that of GTP cyclohydrolase-2 from Aeromonas hydrophila subsp. hydrophila (strain ATCC 7966 / DSM 30187 / BCRC 13018 / CCUG 14551 / JCM 1027 / KCTC 2358 / NCIMB 9240 / NCTC 8049).